Consider the following 289-residue polypeptide: Enoyl-CoA delta isomerase 1, mitochondrial (289 aa).

The transit peptide at 1–28 (MALAAARRLLLHAGSRLGRREAVDGARR) directs the protein to the mitochondrion. N6-acetyllysine; alternate is present on lysine 48. Residue lysine 48 is modified to N6-succinyllysine; alternate. The residue at position 71 (lysine 71) is an N6-succinyllysine. Lysine 76 is subject to N6-acetyllysine. Residues 93–97 (AGLDL), glycine 140, and asparagine 164 each bind substrate. 4 positions are modified to N6-acetyllysine; alternate: lysine 222, lysine 229, lysine 255, and lysine 270. Lysine 222, lysine 229, lysine 255, and lysine 270 each carry N6-succinyllysine; alternate. Position 275 is an N6-succinyllysine (lysine 275). Residue lysine 283 is modified to N6-acetyllysine; alternate. Lysine 283 is modified (N6-succinyllysine; alternate).

It belongs to the enoyl-CoA hydratase/isomerase family. Homotrimer.

It is found in the mitochondrion matrix. It catalyses the reaction a (3Z)-enoyl-CoA = a 4-saturated (2E)-enoyl-CoA. It carries out the reaction a (3E)-enoyl-CoA = a 4-saturated (2E)-enoyl-CoA. The enzyme catalyses (3Z)-octenoyl-CoA = (2E)-octenoyl-CoA. The catalysed reaction is (2E)-tetradecenoyl-CoA = (3Z)-tetradecenoyl-CoA. It catalyses the reaction (3Z)-dodecenoyl-CoA = (2E)-dodecenoyl-CoA. It carries out the reaction (3Z)-hexenoyl-CoA = (2E)-hexenoyl-CoA. The enzyme catalyses (3Z)-decenoyl-CoA = (2E)-decenoyl-CoA. It participates in lipid metabolism; fatty acid beta-oxidation. Its function is as follows. Key enzyme of fatty acid beta-oxidation. Able to isomerize both 3-cis (3Z) and 3-trans (3E) double bonds into the 2-trans (2E) form in a range of enoyl-CoA species, with a preference for (3Z)-enoyl-CoAs over (3E)-enoyl-CoAs. The catalytic efficiency of this enzyme is not affected by the fatty acyl chain length. This chain is Enoyl-CoA delta isomerase 1, mitochondrial, found in Mus musculus (Mouse).